An 89-amino-acid chain; its full sequence is Large ribosomal subunit protein bL27 (89 aa).

The tract at residues 1–21 (MAHKKAGGSSRNGRDSESKRL) is disordered.

The protein belongs to the bacterial ribosomal protein bL27 family.

The polypeptide is Large ribosomal subunit protein bL27 (Chelativorans sp. (strain BNC1)).